Here is a 222-residue protein sequence, read N- to C-terminus: 3-dehydroquinate dehydratase (222 aa).

3-dehydroquinate contacts are provided by residues 29-31 (ELR) and Arg55. His112 serves as the catalytic Proton donor/acceptor. Lys139 (schiff-base intermediate with substrate) is an active-site residue. Arg178, Ser199, and Gln203 together coordinate 3-dehydroquinate.

This sequence belongs to the type-I 3-dehydroquinase family. In terms of assembly, homodimer.

The catalysed reaction is 3-dehydroquinate = 3-dehydroshikimate + H2O. It functions in the pathway metabolic intermediate biosynthesis; chorismate biosynthesis; chorismate from D-erythrose 4-phosphate and phosphoenolpyruvate: step 3/7. Its function is as follows. Involved in the third step of the chorismate pathway, which leads to the biosynthesis of aromatic amino acids. Catalyzes the cis-dehydration of 3-dehydroquinate (DHQ) and introduces the first double bond of the aromatic ring to yield 3-dehydroshikimate. The sequence is that of 3-dehydroquinate dehydratase from Dehalococcoides mccartyi (strain ATCC BAA-2100 / JCM 16839 / KCTC 5957 / BAV1).